The sequence spans 2570 residues: Stabilin-1 (2570 aa).

The first 25 residues, 1 to 25, serve as a signal peptide directing secretion; it reads MAGPRGLLPLCLLAFCLAGFSFVRG. Topologically, residues 26 to 2478 are extracellular; that stretch reads QVLFKGCDVK…LAPEAPPVAA (2453 aa). EGF-like domains lie at 110 to 148, 156 to 193, 195 to 229, and 232 to 271; these read HECPGGAETPCNGHGTCLDGMDRNGTCVCQENFRGSACQ, FGPDCQSVCSCVHGVCNHGPRGDGSCLCFAGYTGPHCD, ELPVCQELRCPQNTQCSAEAPSCRCLPGYTQQGSE, and APNPCWPSPCSLLAQCSVSPKGQAQCHCPENYHGDGMVCL. 11 disulfide bridges follow: Cys112–Cys126, Cys120–Cys136, Cys138–Cys147, Cys160–Cys171, Cys164–Cys181, Cys183–Cys192, Cys199–Cys210, Cys204–Cys217, Cys236–Cys247, Cys241–Cys257, and Cys259–Cys270. A glycan (N-linked (GlcNAc...) asparagine) is linked at Asn133. Asn286, Asn312, Asn413, Asn606, Asn673, Asn712, and Asn745 each carry an N-linked (GlcNAc...) asparagine glycan. 2 consecutive FAS1 domains span residues 356–494 and 506–641; these read YGHL…TGLR and KRTI…DGIL. Residues 728 to 768 form the EGF-like 5 domain; sequence DCTQCPGGFSNPCYGKGNCSDGIQGNGACLCFPDYKGIACH. Cystine bridges form between Cys732/Cys746, Cys740/Cys756, and Cys758/Cys767. N-linked (GlcNAc...) asparagine glycosylation occurs at Asn816. EGF-like domains lie at 818-858, 861-903, 904-946, and 947-986; these read SMGD…DGFS, PSNP…RVCV, AIDE…YQCS, and PIDPCRAGNGGCHGLATCRAVGGGQRVCTCPPGFGGDGFS. Disulfide bonds link Cys822–Cys837, Cys831–Cys846, Cys865–Cys879, Cys873–Cys889, Cys891–Cys902, Cys908–Cys922, Cys916–Cys932, Cys934–Cys945, Cys951–Cys964, and Cys958–Cys974. 2 consecutive FAS1 domains span residues 988-1118 and 1128-1253; these read YGDI…SQVL and GQGL…SGVL. 6 N-linked (GlcNAc...) asparagine glycosylation sites follow: Asn1087, Asn1096, Asn1170, Asn1178, Asn1222, and Asn1274. One can recognise a Laminin EGF-like 1 domain in the interval 1327–1392; sequence TLCEPCPGGL…CDCAHGLCQE (66 aa). 3 cysteine pairs are disulfide-bonded: Cys1332-Cys1346, Cys1340-Cys1356, and Cys1358-Cys1367. N-linked (GlcNAc...) asparagine glycosylation occurs at Asn1378. Disulfide bonds link Cys1379/Cys1390, Cys1383/Cys1400, Cys1402/Cys1411, Cys1420/Cys1430, Cys1424/Cys1440, Cys1442/Cys1453, Cys1459/Cys1472, Cys1466/Cys1482, Cys1484/Cys1495, Cys1501/Cys1514, Cys1508/Cys1524, Cys1526/Cys1538, Cys1544/Cys1557, Cys1551/Cys1567, and Cys1569/Cys1581. 4 consecutive EGF-like domains span residues 1416-1454, 1455-1496, 1497-1539, and 1540-1582; these read TSPQCPRKCDPNANCVQDSAGASTCACAAGYSGNGIFCS, EVDP…ELCQ, EINS…RTCE, and LLDP…LTCR. Residue Asn1471 is glycosylated (N-linked (GlcNAc...) asparagine). 2 FAS1 domains span residues 1582 to 1708 and 1724 to 1864; these read RARV…DRVL and PRRN…DQLL. 2 N-linked (GlcNAc...) asparagine glycosylation sites follow: Asn1626 and Asn1727. Positions 1966 to 2031 constitute a Laminin EGF-like 2 domain; the sequence is SECQACPGGP…RCTVHGRCDE (66 aa). Intrachain disulfides connect Cys1971–Cys1985, Cys1979–Cys1995, Cys1997–Cys2006, Cys2018–Cys2029, Cys2023–Cys2039, Cys2041–Cys2050, Cys2060–Cys2070, Cys2064–Cys2076, Cys2078–Cys2089, Cys2095–Cys2108, Cys2102–Cys2117, Cys2119–Cys2130, Cys2136–Cys2150, Cys2144–Cys2160, and Cys2162–Cys2173. EGF-like domains lie at 2056–2090, 2091–2131, and 2132–2174; these read LQPVCTPPCAPEAVCRAGNSCECSLGYEGDGRVCT, VADL…WSCR, and ARNP…LQCL. An N-linked (GlcNAc...) asparagine glycan is attached at Asn2107. The Link domain occupies 2206–2301; that stretch reads RAGVFHLQAT…SERWDAYCFR (96 aa). 9 N-linked (GlcNAc...) asparagine glycosylation sites follow: Asn2222, Asn2261, Asn2290, Asn2334, Asn2347, Asn2379, Asn2393, Asn2400, and Asn2424. Cystine bridges form between Cys2230/Cys2299 and Cys2254/Cys2275. The FAS1 7 domain occupies 2322-2459; sequence NGKLLDVLAA…GIIHALASPL (138 aa). Residues 2479–2499 traverse the membrane as a helical segment; that stretch reads GVGAVLAAGALLGLVAGALYL. Residues 2500-2570 are Cytoplasmic-facing; it reads RARGKPMGFG…PDTQRILTVK (71 aa).

In terms of assembly, interacts with CHID1. As to expression, high levels found in spleen, lymph node, liver and placenta. Also expressed in endothelial cells.

It localises to the membrane. Functionally, acts as a scavenger receptor for acetylated low density lipoprotein. Binds to both Gram-positive and Gram-negative bacteria and may play a role in defense against bacterial infection. When inhibited in endothelial tube formation assays, there is a marked decrease in cell-cell interactions, suggesting a role in angiogenesis. Involved in the delivery of newly synthesized CHID1/SI-CLP from the biosynthetic compartment to the endosomal/lysosomal system. The protein is Stabilin-1 (STAB1) of Homo sapiens (Human).